The sequence spans 112 residues: Putative pterin-4-alpha-carbinolamine dehydratase (112 aa).

The protein belongs to the pterin-4-alpha-carbinolamine dehydratase family.

The enzyme catalyses (4aS,6R)-4a-hydroxy-L-erythro-5,6,7,8-tetrahydrobiopterin = (6R)-L-erythro-6,7-dihydrobiopterin + H2O. This is Putative pterin-4-alpha-carbinolamine dehydratase from Shewanella baltica (strain OS155 / ATCC BAA-1091).